Here is a 291-residue protein sequence, read N- to C-terminus: MADLDDIKDGKDFHTDKPQTNTLFALKGCGALDWGMQSRLARIFNPKTRKTVMLAFDHGYFQGPTTGLERIDINIAPLFEYADVLMCTRGILRSVVPPAINKPVVLRASGANSILTELSNEAVAVAMDDAVRLNSCAAAAQVYIGSEHEHQSIKNIIQLIDAGLRVGMPIMAVTGVGKDMARDQRYFSLATRIAAEMGAQIIKTYYVDKGFERIAAGCPVPIVIAGGKKLPEREALEMCYQAIDQGASGVDMGRNIFQSEDPVAMIKAVHAVVHHNETAERAYELFLSEKG.

The Schiff-base intermediate with substrate role is filled by Lys-203.

This sequence belongs to the DeoC/FbaB aldolase family. Homodecamer.

It is found in the cytoplasm. It catalyses the reaction dihydroxyacetone phosphate + acetyl-CoA = 3-hydroxy-2,4-dioxopentyl phosphate + CoA. In terms of biological role, involved in the degradation of phospho-AI-2, thereby terminating induction of the lsr operon and closing the AI-2 signaling cycle. Catalyzes the transfer of an acetyl moiety from 3-hydroxy-5-phosphonooxypentane-2,4-dione to CoA to form glycerone phosphate and acetyl-CoA. This is 3-hydroxy-5-phosphonooxypentane-2,4-dione thiolase from Salmonella paratyphi A (strain ATCC 9150 / SARB42).